The chain runs to 400 residues: Enoyl-[acyl-carrier-protein] reductase [NADH] 2 (400 aa).

NAD(+)-binding positions include Gly48 to Phe53, Phe75 to Glu76, Asp112 to Ala113, and Leu141 to Ala142. Residue Tyr228 coordinates substrate. The active-site Proton donor is Tyr238. NAD(+)-binding positions include Lys247 and Leu276–Thr278.

The protein belongs to the TER reductase family. Monomer.

The enzyme catalyses a 2,3-saturated acyl-[ACP] + NAD(+) = a (2E)-enoyl-[ACP] + NADH + H(+). The protein operates within lipid metabolism; fatty acid biosynthesis. Functionally, involved in the final reduction of the elongation cycle of fatty acid synthesis (FAS II). Catalyzes the reduction of a carbon-carbon double bond in an enoyl moiety that is covalently linked to an acyl carrier protein (ACP). The polypeptide is Enoyl-[acyl-carrier-protein] reductase [NADH] 2 (Vibrio vulnificus (strain CMCP6)).